The following is a 61-amino-acid chain: uncharacterized protein (61 aa).

The Extracellular segment spans residues 1 to 20 (MSSTTSTINLSSLGSAINDV). A helical transmembrane segment spans residues 21–41 (LNIIVQYLPVFVTVAVLFGII). Residues 42 to 61 (TYMTGGLGGLFSGITGIFGS) lie on the Cytoplasmic side of the membrane.

It localises to the host membrane. This is an uncharacterized protein from Acidianus filamentous virus 2 (isolate Italy/Pozzuoli) (AFV-2).